The following is a 428-amino-acid chain: 2-isopropylmalate synthase 2 (428 aa).

The region spanning 40–302 (PFFMDVTLRD…EVPLNFSTIY (263 aa)) is the Pyruvate carboxyltransferase domain. Asp-49, His-241, His-243, and Asn-277 together coordinate Mn(2+).

This sequence belongs to the alpha-IPM synthase/homocitrate synthase family. LeuA type 1 subfamily. Homodimer. Mn(2+) is required as a cofactor.

Its subcellular location is the cytoplasm. It carries out the reaction 3-methyl-2-oxobutanoate + acetyl-CoA + H2O = (2S)-2-isopropylmalate + CoA + H(+). It functions in the pathway amino-acid biosynthesis; L-leucine biosynthesis; L-leucine from 3-methyl-2-oxobutanoate: step 1/4. Its function is as follows. Catalyzes the condensation of the acetyl group of acetyl-CoA with 3-methyl-2-oxobutanoate (2-ketoisovalerate) to form 3-carboxy-3-hydroxy-4-methylpentanoate (2-isopropylmalate). Has high alpha-isopropylmalate synthase activity and low citramalate synthase activity. The protein is 2-isopropylmalate synthase 2 of Leptospira interrogans serogroup Icterohaemorrhagiae serovar Lai (strain 56601).